The sequence spans 173 residues: CKLF-like MARVEL transmembrane domain-containing protein 8 (173 aa).

Residues 36–168 (FLRTLPGFLI…NTYFSFIAWR (133 aa)) enclose the MARVEL domain. A run of 4 helical transmembrane segments spans residues 40–60 (LPGF…TLIA), 70–90 (FGWV…FLII), 105–125 (TTVG…AAVV), and 147–167 (FFAF…FIAW).

The protein belongs to the chemokine-like factor family. In terms of tissue distribution, highly expressed in liver and pancreas.

The protein localises to the membrane. The protein resides in the cytoplasm. Its subcellular location is the nucleus. The sequence is that of CKLF-like MARVEL transmembrane domain-containing protein 8 (CMTM8) from Homo sapiens (Human).